A 359-amino-acid chain; its full sequence is Protein mab-21-like 2 (359 aa).

This sequence belongs to the mab-21 family.

The protein resides in the nucleus. Its subcellular location is the cytoplasm. Required for several aspects of embryonic development including normal development of the eye. The polypeptide is Protein mab-21-like 2 (MAB21L2) (Homo sapiens (Human)).